The primary structure comprises 158 residues: Transcription elongation factor GreA (158 aa).

It belongs to the GreA/GreB family.

Its function is as follows. Necessary for efficient RNA polymerase transcription elongation past template-encoded arresting sites. The arresting sites in DNA have the property of trapping a certain fraction of elongating RNA polymerases that pass through, resulting in locked ternary complexes. Cleavage of the nascent transcript by cleavage factors such as GreA or GreB allows the resumption of elongation from the new 3'terminus. GreA releases sequences of 2 to 3 nucleotides. The chain is Transcription elongation factor GreA from Macrococcus caseolyticus (strain JCSC5402) (Macrococcoides caseolyticum).